Consider the following 322-residue polypeptide: ATP-dependent 6-phosphofructokinase (322 aa).

Gly-13 provides a ligand contact to ATP. An ADP-binding site is contributed by 23 to 27 (RAVVR). Residues 74–75 (RC) and 104–107 (GDGS) each bind ATP. Asp-105 provides a ligand contact to Mg(2+). A substrate-binding site is contributed by 127 to 129 (TID). The active-site Proton acceptor is Asp-129. Arg-156 contacts ADP. Substrate-binding positions include Arg-164 and 171-173 (MGR). ADP contacts are provided by residues 187–189 (GAE) and 215–217 (KRH). Substrate is bound by residues Glu-224, Arg-246, and 252–255 (HIQR).

It belongs to the phosphofructokinase type A (PFKA) family. ATP-dependent PFK group I subfamily. Prokaryotic clade 'B1' sub-subfamily. In terms of assembly, homotetramer. Requires Mg(2+) as cofactor.

The protein resides in the cytoplasm. It catalyses the reaction beta-D-fructose 6-phosphate + ATP = beta-D-fructose 1,6-bisphosphate + ADP + H(+). It participates in carbohydrate degradation; glycolysis; D-glyceraldehyde 3-phosphate and glycerone phosphate from D-glucose: step 3/4. With respect to regulation, allosterically activated by ADP and other diphosphonucleosides, and allosterically inhibited by phosphoenolpyruvate. Catalyzes the phosphorylation of D-fructose 6-phosphate to fructose 1,6-bisphosphate by ATP, the first committing step of glycolysis. This chain is ATP-dependent 6-phosphofructokinase, found in Paenibacillus macquariensis (Bacillus macquariensis).